A 120-amino-acid polypeptide reads, in one-letter code: Small ribosomal subunit protein uS13 (120 aa).

The tract at residues 93–120 (GLPVRGQNTKNNARTRKGPRRTVANKKK) is disordered. Residues 105-120 (ARTRKGPRRTVANKKK) are compositionally biased toward basic residues.

Belongs to the universal ribosomal protein uS13 family. Part of the 30S ribosomal subunit. Has been shown to cross-link to S19 forming a loose heterodimer. Forms two bridges to the 50S subunit in the 70S ribosome.

Functionally, located at the top of the head of the 30S subunit, it contacts several helices of the 16S rRNA. In the 70S ribosome it contacts the 23S rRNA (bridge B1a) and protein L5 of the 50S subunit (bridge B1b), connecting the 2 subunits; these bridges are implicated in subunit movement. Contacts the tRNA in the A and P-sites. The protein is Small ribosomal subunit protein uS13 (rpsM) of Geobacillus stearothermophilus (Bacillus stearothermophilus).